Reading from the N-terminus, the 111-residue chain is Large ribosomal subunit protein uL23 (111 aa).

It belongs to the universal ribosomal protein uL23 family. In terms of assembly, part of the 50S ribosomal subunit. Contacts protein L29, and trigger factor when it is bound to the ribosome.

One of the early assembly proteins it binds 23S rRNA. One of the proteins that surrounds the polypeptide exit tunnel on the outside of the ribosome. Forms the main docking site for trigger factor binding to the ribosome. The polypeptide is Large ribosomal subunit protein uL23 (Chlamydia abortus (strain DSM 27085 / S26/3) (Chlamydophila abortus)).